Here is a 513-residue protein sequence, read N- to C-terminus: Zinc finger CCCH-type with G patch domain-containing protein (513 aa).

A C3H1-type zinc finger spans residues proline 155–leucine 178. Acidic residues-rich tracts occupy residues aspartate 252–serine 261 and aspartate 271–leucine 283. Residues aspartate 252–leucine 283 are disordered. The G-patch domain maps to threonine 312–glutamate 358. Over residues aspartate 455 to serine 467 the composition is skewed to basic and acidic residues. The tract at residues aspartate 455–phenylalanine 513 is disordered. Over residues glycine 468–methionine 480 the composition is skewed to polar residues. Basic and acidic residues predominate over residues serine 496 to phenylalanine 513.

The protein resides in the nucleus. Functionally, transcription repressor. This is Zinc finger CCCH-type with G patch domain-containing protein from Drosophila yakuba (Fruit fly).